The following is a 97-amino-acid chain: Plastocyanin A/B (97 aa).

The 97-residue stretch at 1 to 97 folds into the Plastocyanin-like domain; it reads AEVKLGSDDG…AGMKGEVTVN (97 aa). 4 residues coordinate Cu cation: histidine 37, cysteine 82, histidine 85, and methionine 90.

It belongs to the plastocyanin family. The cofactor is Cu(2+).

Its subcellular location is the plastid. It is found in the chloroplast thylakoid membrane. In terms of biological role, participates in electron transfer between P700 and the cytochrome b6-f complex in photosystem I. The polypeptide is Plastocyanin A/B (PETE) (Petroselinum crispum (Parsley)).